Here is a 269-residue protein sequence, read N- to C-terminus: Surfeit locus protein 4 (269 aa).

Transmembrane regions (helical) follow at residues L64–V84, Y92–W112, F179–F199, L203–W223, and F239–G259. Positions K266–W269 match the Di-lysine motif motif.

The protein belongs to the SURF4 family. Found in a complex composed at least of SURF4, TMED2 and TMED10. May interact with LMAN1. Interacts with ZFYVE27 and with KIF5A in a ZFYVE27-dependent manner. Interacts with STING1. Interacts with SAR1B. Interacts with TMEM41B.

The protein resides in the endoplasmic reticulum membrane. The protein localises to the endoplasmic reticulum-Golgi intermediate compartment membrane. It is found in the golgi apparatus membrane. Functionally, endoplasmic reticulum cargo receptor that mediates the export of lipoproteins by recruiting cargos into COPII vesicles to facilitate their secretion. Acts as a cargo receptor for lipoproteins bearing both APOB and APOA1, thereby regulating lipoprotein delivery and the maintenance of lipid homeostasis. Synergizes with the GTPase SAR1B to mediate transport of circulating lipoproteins. Promotes the secretion of PCSK9. Also mediates the efficient secretion of erythropoietin (EPO). May also play a role in the maintenance of the architecture of the endoplasmic reticulum-Golgi intermediate compartment and of the Golgi. The chain is Surfeit locus protein 4 from Bos taurus (Bovine).